The primary structure comprises 427 residues: Serine--tRNA ligase (427 aa).

236–238 (TAE) is an L-serine binding site. Residue 267-269 (RSE) participates in ATP binding. Glu-290 provides a ligand contact to L-serine. ATP is bound at residue 354 to 357 (EISS). Ser-388 provides a ligand contact to L-serine.

It belongs to the class-II aminoacyl-tRNA synthetase family. Type-1 seryl-tRNA synthetase subfamily. Homodimer. The tRNA molecule binds across the dimer.

The protein resides in the cytoplasm. The catalysed reaction is tRNA(Ser) + L-serine + ATP = L-seryl-tRNA(Ser) + AMP + diphosphate + H(+). The enzyme catalyses tRNA(Sec) + L-serine + ATP = L-seryl-tRNA(Sec) + AMP + diphosphate + H(+). It functions in the pathway aminoacyl-tRNA biosynthesis; selenocysteinyl-tRNA(Sec) biosynthesis; L-seryl-tRNA(Sec) from L-serine and tRNA(Sec): step 1/1. Its function is as follows. Catalyzes the attachment of serine to tRNA(Ser). Is also able to aminoacylate tRNA(Sec) with serine, to form the misacylated tRNA L-seryl-tRNA(Sec), which will be further converted into selenocysteinyl-tRNA(Sec). The sequence is that of Serine--tRNA ligase from Psychrobacter arcticus (strain DSM 17307 / VKM B-2377 / 273-4).